The chain runs to 928 residues: Sodium/calcium exchanger 3 (928 aa).

Positions 1 to 30 (MAWLRLQPLTSAFLHFGLVTFVLFLNCLRA) are cleaved as a signal peptide. The Extracellular segment spans residues 31-73 (EAGDSGDVPSAGQNNESCSGSSDCKEGVILPIWYPENPSLGDK). Asn45 carries N-linked (GlcNAc...) asparagine glycosylation. The chain crosses the membrane as a helical span at residues 74-94 (IARVIVYFVALIYMFLGVSII). Residues 95-147 (ADRFMASIEVITSQEREVTIKKPNGETSTTTIRVWNETVSNLTLMALGSSAPE) lie on the Cytoplasmic side of the membrane. A helical membrane pass occupies residues 148 to 168 (ILLSLIEVCGHGFIAGDLGPS). Residue Thr169 is a topological domain, extracellular. The chain crosses the membrane as a helical span at residues 170 to 190 (IVGSAAFNMFIIIGICVYVIP). Topologically, residues 191–201 (DGETRKIKHLR) are cytoplasmic. The chain crosses the membrane as a helical span at residues 202-222 (VFFVTAAWSIFAYIWLYMILA). Residues 223–230 (VFSPGVVQ) are Extracellular-facing. A helical transmembrane segment spans residues 231-251 (VWEGLLTLFFFPVCVLLAWVA). The Cytoplasmic segment spans residues 252-727 (DKRLLFYKYM…DESGEERLPS (476 aa)). The interval 253-272 (KRLLFYKYMHKKYRTDKHRG) is putative calmodulin-binding region. 2 consecutive Calx-beta domains span residues 390 to 485 (EPED…VRLS) and 519 to 618 (ATVT…VIEM). Ca(2+) is bound by residues Glu409, Asp445, Asp470, Asp471, Ile473, Glu475, Glu478, Asp525, Asp526, Asp527, Glu543, Asp579, Asp605, and Glu673. A helical membrane pass occupies residues 728–748 (CFDYVMHFLTVFWKVLFACVP). Topologically, residues 749–755 (PTEYCHG) are extracellular. The chain crosses the membrane as a helical span at residues 756–776 (WACFVVSILIIGMLTAIIGDL). Residues 777–779 (ASH) are Cytoplasmic-facing. Residues 780–800 (FGCTIGLKDSVTAVVFVAFGT) traverse the membrane as a helical segment. Residues 801 to 829 (SVPDTFASKAAALQDVYADASIGNVTGSN) are Extracellular-facing. N-linked (GlcNAc...) asparagine glycosylation is present at Asn824. The helical transmembrane segment at 830–850 (AVNVFLGIGLAWSVAAIYWAM) threads the bilayer. Over 851–861 (QGQEFHVSAGT) the chain is Cytoplasmic. The chain crosses the membrane as a helical span at residues 862–882 (LAFSVTLFTIFAFVCLSVLLY). The Extracellular portion of the chain corresponds to 883–904 (RRRPHLGGELGGPRGCKLATTW). A helical transmembrane segment spans residues 905–925 (LFVSLWLLYILFATLEAYCYI). At 926-928 (KGF) the chain is on the cytoplasmic side.

This sequence belongs to the Ca(2+):cation antiporter (CaCA) (TC 2.A.19) family. SLC8 subfamily. As to quaternary structure, interacts with AKAP1. In terms of tissue distribution, detected in gray and white matter in the spinal cord. Detected in hippocampus neurons. Detected in brain cortex neurons. Detected in skeletal muscle (at protein level). Isoform 1 and isoform 2 are highly expressed in brain; levels are higher for isoform 2. Isoform 1 and isoform 2 are detected in soleus muscle; levels are higher for isoform 1. Detected in gastrocnemius muscle.

It localises to the cell membrane. It is found in the perikaryon. Its subcellular location is the cell projection. The protein localises to the dendrite. The protein resides in the dendritic spine. It localises to the sarcolemma. It is found in the cytoplasm. Its subcellular location is the sarcoplasm. The protein localises to the cell junction. The protein resides in the mitochondrion outer membrane. It localises to the perinuclear region. It is found in the endoplasmic reticulum membrane. The catalysed reaction is Ca(2+)(in) + 3 Na(+)(out) = Ca(2+)(out) + 3 Na(+)(in). Calcium transport is stimulated by cytoplasmic Ca(2+) and is inhibited by Na(+). Isoform 1 is more sensitive to stimulation by Ca(2+) than isoform 2. Isoform 2 is more sensitive to inactivation by Na(+). Functionally, mediates the electrogenic exchange of Ca(2+) against Na(+) ions across the cell membrane, and thereby contributes to the regulation of cytoplasmic Ca(2+) levels and Ca(2+)-dependent cellular processes. Contributes to cellular Ca(2+) homeostasis in excitable cells, both in muscle and in brain. In a first phase, voltage-gated channels mediate the rapid increase of cytoplasmic Ca(2+) levels due to release of Ca(2+) stores from the endoplasmic reticulum. SLC8A3 mediates the export of Ca(2+) from the cell during the next phase, so that cytoplasmic Ca(2+) levels rapidly return to baseline. Contributes to Ca(2+) transport during excitation-contraction coupling in muscle. In neurons, contributes to the rapid decrease of cytoplasmic Ca(2+) levels back to baseline after neuronal activation, and thereby contributes to modulate synaptic plasticity, learning and memory. Required for normal oligodendrocyte differentiation and for normal myelination. Mediates Ca(2+) efflux from mitochondria and contributes to mitochondrial Ca(2+) ion homeostasis. Isoform 1 displays higher calcium exchanger activity than isoform 2, probably because isoform 1 has a lower threshold for activation by cytoplasmic Ca(2+). In Mus musculus (Mouse), this protein is Sodium/calcium exchanger 3.